Here is a 142-residue protein sequence, read N- to C-terminus: Large-conductance mechanosensitive channel (142 aa).

The next 3 membrane-spanning stretches (helical) occupy residues 15-35, 38-58, and 82-102; these read AFVM…GAAF, IVTS…IGNI, and GMFI…FVAI.

The protein belongs to the MscL family. As to quaternary structure, homopentamer.

Its subcellular location is the cell inner membrane. Functionally, channel that opens in response to stretch forces in the membrane lipid bilayer. May participate in the regulation of osmotic pressure changes within the cell. The protein is Large-conductance mechanosensitive channel of Fusobacterium nucleatum subsp. nucleatum (strain ATCC 25586 / DSM 15643 / BCRC 10681 / CIP 101130 / JCM 8532 / KCTC 2640 / LMG 13131 / VPI 4355).